Reading from the N-terminus, the 415-residue chain is Ornithine cyclodeaminase (415 aa).

NAD(+) contacts are provided by asparagine 241, alanine 242, aspartate 320, threonine 352, leucine 354, histidine 355, aspartate 373, aspartate 396, and valine 397.

It belongs to the AgrE/ArgZ ornithine cyclodeaminase family. It depends on NAD(+) as a cofactor.

The enzyme catalyses L-ornithine = L-proline + NH4(+). In terms of biological role, catalyzes the conversion of ornithine to proline, with the release of ammonia. This Methanococcus maripaludis (strain DSM 14266 / JCM 13030 / NBRC 101832 / S2 / LL) protein is Ornithine cyclodeaminase.